Reading from the N-terminus, the 69-residue chain is Large ribosomal subunit protein uL29 (69 aa).

This sequence belongs to the universal ribosomal protein uL29 family.

The chain is Large ribosomal subunit protein uL29 from Oenococcus oeni (strain ATCC BAA-331 / PSU-1).